Here is a 526-residue protein sequence, read N- to C-terminus: 2-isopropylmalate synthase (526 aa).

The Pyruvate carboxyltransferase domain occupies 5-267 (VIIFDTTLRD…HTGIRHQEIY (263 aa)). Positions 14, 202, 204, and 238 each coordinate Mn(2+). Positions 393–526 (RLEYFSVQSG…VPSISTSSTH (134 aa)) are regulatory domain.

Belongs to the alpha-IPM synthase/homocitrate synthase family. LeuA type 1 subfamily. As to quaternary structure, homodimer. It depends on Mn(2+) as a cofactor.

Its subcellular location is the cytoplasm. It carries out the reaction 3-methyl-2-oxobutanoate + acetyl-CoA + H2O = (2S)-2-isopropylmalate + CoA + H(+). It functions in the pathway amino-acid biosynthesis; L-leucine biosynthesis; L-leucine from 3-methyl-2-oxobutanoate: step 1/4. Its function is as follows. Catalyzes the condensation of the acetyl group of acetyl-CoA with 3-methyl-2-oxobutanoate (2-ketoisovalerate) to form 3-carboxy-3-hydroxy-4-methylpentanoate (2-isopropylmalate). This chain is 2-isopropylmalate synthase, found in Edwardsiella ictaluri (strain 93-146).